The primary structure comprises 2280 residues: Metacaspase-3 (2280 aa).

Disordered stretches follow at residues 56-83 (ILSK…DRED), 202-284 (YSTE…THRG), 791-819 (YKNS…MVNN), 931-954 (DDNS…RYDK), 994-1015 (SGKY…DDSE), 1278-1306 (KTNN…NPFI), and 1469-1500 (KAPT…NANA). Basic and acidic residues predominate over residues 63–83 (NKNENIKKRINEKDNDTDRED). Composition is skewed to polar residues over residues 205 to 219 (EHTQ…TSKR) and 228 to 278 (DKAQ…NRKG). Composition is skewed to low complexity over residues 793–819 (NSMN…MVNN) and 931–941 (DDNSVQDSFFS). Composition is skewed to low complexity over residues 1278–1303 (KTNN…NNSN) and 1482–1500 (APTN…NANA).

The protein belongs to the peptidase C14B family.

Protease that cleaves specifically after arginine or lysine residues. The chain is Metacaspase-3 from Plasmodium falciparum (isolate 3D7).